Here is a 291-residue protein sequence, read N- to C-terminus: Translocon-associated protein subunit alpha (291 aa).

The signal sequence occupies residues 1 to 20; that stretch reads MRLLPRLLLLLLLVFPATVL. The Lumenal segment spans residues 21 to 207; the sequence is FRGGPRGSLA…EREDGLDGET (187 aa). The disordered stretch occupies residues 34–83; that stretch reads DLTEDEETVEDSIIEDEDDEAEVEEDEPTDLVEDKEEEDVSGEPEASPSA. Residues 35 to 75 show a composition bias toward acidic residues; that stretch reads LTEDEETVEDSIIEDEDDEAEVEEDEPTDLVEDKEEEDVSG. Asparagine 136 and asparagine 191 each carry an N-linked (GlcNAc...) asparagine glycan. A helical membrane pass occupies residues 208–228; it reads IFMYMFLAGLGLLVIVGLHQL. Residues 229 to 291 are Cytoplasmic-facing; that stretch reads LESRKRKRPV…AQKRSVGSDE (63 aa). A Phosphoserine modification is found at serine 247. Threonine 260 bears the Phosphothreonine mark. Positions 263-291 are disordered; that stretch reads QIMQSRRDKASPRRLPRKRAQKRSVGSDE. A Phosphoserine modification is found at serine 273. The span at 274 to 284 shows a compositional bias: basic residues; that stretch reads PRRLPRKRAQK.

This sequence belongs to the TRAP-alpha family. As to quaternary structure, heterotetramer of TRAP-alpha, TRAP-beta, TRAP-delta and TRAP-gamma. Interacts with palmitoylated calnexin (CALX), the interaction is required for efficient folding of glycosylated proteins. In terms of processing, phosphorylated in its cytoplasmic tail.

Its subcellular location is the endoplasmic reticulum membrane. Functionally, TRAP proteins are part of a complex whose function is to bind calcium to the ER membrane and thereby regulate the retention of ER resident proteins. May be involved in the recycling of the translocation apparatus after completion of the translocation process or may function as a membrane-bound chaperone facilitating folding of translocated proteins. The chain is Translocon-associated protein subunit alpha (SSR1) from Pongo abelii (Sumatran orangutan).